Here is a 346-residue protein sequence, read N- to C-terminus: E3 ubiquitin-protein ligase RNF146-A (346 aa).

An RING-type zinc finger spans residues 37–75 (CAICLQTCVHPVSLPCKHVFCYLCVKGASWLGKRCALCR). The WWE domain maps to 91 to 167 (PELKAASRGN…EHGRRRKIKR (77 aa)). Disordered stretches follow at residues 195-240 (SSAD…GTSL) and 256-301 (ERSH…ALVA). The segment covering 202 to 216 (SVPAQSGASVQSSSV) has biased composition (low complexity). The segment covering 281–295 (SIEETESDASSDSED) has biased composition (acidic residues).

In terms of assembly, interacts with poly-ADP-ribosylated AXIN1, AXIN2, BLZF1 and CASC3. Post-translationally, ubiquitinated; autoubiquitinated. Autoubiquitination is enhanced upon poly(ADP-ribose)-binding.

It is found in the cytoplasm. The protein localises to the cytosol. It carries out the reaction S-ubiquitinyl-[E2 ubiquitin-conjugating enzyme]-L-cysteine + [acceptor protein]-L-lysine = [E2 ubiquitin-conjugating enzyme]-L-cysteine + N(6)-ubiquitinyl-[acceptor protein]-L-lysine.. It functions in the pathway protein modification; protein ubiquitination. Its function is as follows. E3 ubiquitin-protein ligase that specifically binds poly-ADP-ribosylated proteins and mediates their ubiquitination and subsequent degradation. Acts as an activator of the Wnt signaling pathway by mediating the ubiquitination of poly-ADP-ribosylated AXIN1 and AXIN2, 2 key components of the beta-catenin destruction complex. Acts in cooperation with tankyrase proteins (TNKS and TNKS2), which mediate poly-ADP-ribosylation of target proteins AXIN1, AXIN2, BLZF1, CASC3, TNKS and TNKS2. Recognizes and binds tankyrase-dependent poly-ADP-ribosylated proteins via its WWE domain and mediates their ubiquitination. The polypeptide is E3 ubiquitin-protein ligase RNF146-A (RNF146A) (Bos taurus (Bovine)).